We begin with the raw amino-acid sequence, 914 residues long: Origin recognition complex subunit 1 (914 aa).

Residues 48 to 188 form the BAH domain; that stretch reads IKLGRGDSVV…PTGEKFVDIN (141 aa). The segment at 218–343 is disordered; that stretch reads KEIKRGPQKK…PKDPSKPRQM (126 aa). Positions 221-230 are enriched in basic and acidic residues; it reads KRGPQKKDKA. S237 carries the post-translational modification Phosphoserine. Residues 247 to 296 show a composition bias toward acidic residues; that stretch reads TDNEDGNEDESSDYESPSDIDVSEDMDSGEISADELEEEEDEEEDEDEEE. Basic residues predominate over residues 303–313; sequence NSPRKRGRKIK. Residues V435 and 479 to 487 each bind ATP; that span reads GTPGVGKTL. Mg(2+)-binding residues include D566 and E567. ATP contacts are provided by residues E567, N600, R704, and 726–733; that span reads GYGYDGKT.

It belongs to the ORC1 family. Component of the origin recognition complex (ORC) composed of at least ORC1, ORC2, ORC3, ORC4, ORC5 and ORC6. Interacts with MCM10 and TAH11.

The protein localises to the nucleus. In terms of biological role, component of the origin recognition complex (ORC) that binds origins of replication. It has a role in both chromosomal replication and mating type transcriptional silencing. Binds to the ARS consensus sequence (ACS) of origins of replication. This chain is Origin recognition complex subunit 1 (ORC1), found in Saccharomyces cerevisiae (strain ATCC 204508 / S288c) (Baker's yeast).